The chain runs to 471 residues: MPN domain-containing protein (471 aa).

The span at 1–10 (MAAPEPLSPA) shows a compositional bias: low complexity. Positions 1–63 (MAAPEPLSPA…GGGGAGAGGC (63 aa)) are disordered. The residue at position 2 (Ala2) is an N-acetylalanine. Ser8 bears the Phosphoserine mark. The segment covering 16–29 (EAPEEDEDEAEAED) has biased composition (acidic residues). Positions 36–63 (GAGGGRSGGGGSSVSGGGGGGGAGAGGC) are enriched in gly residues. Positions 71 to 166 (TRRAVTLRVL…KYKATWLRLH (96 aa)) constitute an RAMA domain. The DNA site is built by Ser123, Ser125, and Trp145. Residues 170 to 229 (TPATAADESPASEGEEEELLMEEEEEDVLAGVSAEDKSRRPLGKSPSEPAHPEATTPGKR) form a disordered region. Residues Ser178 and Ser181 each carry the phosphoserine modification. A compositionally biased stretch (acidic residues) spans 182 to 197 (EGEEEELLMEEEEEDV). The 136-residue stretch at 272–407 (VAVSSNVLFL…PESKISPFWV (136 aa)) folds into the MPN domain. Residues His349, His351, and Asp362 each coordinate Zn(2+). The short motif at 349–362 (HSHPHSPALPSLQD) is the JAMM motif element.

This sequence belongs to the peptidase M67 family. Monomer. Mainly monomoric, but when binds to dsDNA, forms homotetramer assembled into two homodimers. May interact with histones; this interaction is facilitated by dsDNA binding. Post-translationally, degraded following binding to N(6)-methyladenosine methylated DNA (m6A).

Functionally, probable protease. Acts as a sensor of N(6)-methyladenosine methylation on DNA (m6A): recognizes and binds m6A DNA, leading to its degradation. Binds only double strand DNA (dsDNA) in a sequence-independent manner. The sequence is that of MPN domain-containing protein from Homo sapiens (Human).